Here is a 139-residue protein sequence, read N- to C-terminus: NADPH-dependent 7-cyano-7-deazaguanine reductase (139 aa).

The Thioimide intermediate role is filled by Cys34. Asp41 acts as the Proton donor in catalysis. Residues 56-58 and 75-76 each bind substrate; these read IEL and HE.

It belongs to the GTP cyclohydrolase I family. QueF type 1 subfamily.

It is found in the cytoplasm. It catalyses the reaction 7-aminomethyl-7-carbaguanine + 2 NADP(+) = 7-cyano-7-deazaguanine + 2 NADPH + 3 H(+). The protein operates within tRNA modification; tRNA-queuosine biosynthesis. In terms of biological role, catalyzes the NADPH-dependent reduction of 7-cyano-7-deazaguanine (preQ0) to 7-aminomethyl-7-deazaguanine (preQ1). The sequence is that of NADPH-dependent 7-cyano-7-deazaguanine reductase from Nitrosomonas europaea (strain ATCC 19718 / CIP 103999 / KCTC 2705 / NBRC 14298).